We begin with the raw amino-acid sequence, 990 residues long: Serine/threonine-protein kinase ATG1 (990 aa).

Residues 15-334 (FVIENEIGKG…FDDFFASPVI (320 aa)) form the Protein kinase domain. ATP-binding positions include 21 to 29 (IGKGSFAVV) and Lys-44. The active-site Proton acceptor is Asp-165. Polar residues predominate over residues 375 to 408 (VSSIEASTQQPGVQPPVSTATSPPALESRSTQEA). Disordered stretches follow at residues 375–499 (VSSI…GGED), 529–566 (SRLG…TILS), 579–614 (ASTG…QGGQ), 750–784 (LSQE…SSSS), and 970–990 (SPVG…TESP). Composition is skewed to low complexity over residues 529–554 (SRLG…SAPG) and 587–613 (PPGS…RQGG). The span at 750–771 (LSQELDSSTATSGISPSRNSVQ) shows a compositional bias: polar residues. Positions 772–784 (GSARRVGSISSSS) are enriched in low complexity.

This sequence belongs to the protein kinase superfamily. Ser/Thr protein kinase family. APG1/unc-51/ULK1 subfamily. As to quaternary structure, homodimer. Forms a ternary complex with ATG13 and ATG17.

It is found in the cytoplasm. Its subcellular location is the preautophagosomal structure membrane. It catalyses the reaction L-seryl-[protein] + ATP = O-phospho-L-seryl-[protein] + ADP + H(+). It carries out the reaction L-threonyl-[protein] + ATP = O-phospho-L-threonyl-[protein] + ADP + H(+). Serine/threonine protein kinase involved in the cytoplasm to vacuole transport (Cvt) and found to be essential in autophagy, where it is required for the formation of autophagosomes. Involved in the clearance of protein aggregates which cannot be efficiently cleared by the proteasome. Required for selective autophagic degradation of the nucleus (nucleophagy) as well as for mitophagy which contributes to regulate mitochondrial quantity and quality by eliminating the mitochondria to a basal level to fulfill cellular energy requirements and preventing excess ROS production. Also involved in endoplasmic reticulum-specific autophagic process, in selective removal of ER-associated degradation (ERAD) substrates. Plays a key role in ATG9 and ATG23 cycling through the pre-autophagosomal structure and is necessary to promote ATG18 binding to ATG9 through phosphorylation of ATG9. Catalyzes phosphorylation of ATG4, decreasing the interaction between ATG4 and ATG8 and impairing deconjugation of PE-conjugated forms of ATG8. Required for wild-type budding of haploid sporidia and for complete symptom development during pathogenic growth such as gall formation and teliospore production in ears of mature maize. This chain is Serine/threonine-protein kinase ATG1, found in Mycosarcoma maydis (Corn smut fungus).